Consider the following 256-residue polypeptide: uncharacterized protein (256 aa).

Residue 9 to 33 (VTGGGQGIGAAIAQLFAENGMKVVI) coordinates NADP(+). Residue Ser140 coordinates substrate. Tyr153 (proton acceptor) is an active-site residue.

The protein belongs to the short-chain dehydrogenases/reductases (SDR) family.

This is an uncharacterized protein from Thermotoga maritima (strain ATCC 43589 / DSM 3109 / JCM 10099 / NBRC 100826 / MSB8).